A 274-amino-acid chain; its full sequence is 2,3,4,5-tetrahydropyridine-2,6-dicarboxylate N-succinyltransferase (274 aa).

Residues Arg-104 and Asp-141 each coordinate substrate.

The protein belongs to the transferase hexapeptide repeat family. Homotrimer.

It localises to the cytoplasm. It carries out the reaction (S)-2,3,4,5-tetrahydrodipicolinate + succinyl-CoA + H2O = (S)-2-succinylamino-6-oxoheptanedioate + CoA. The protein operates within amino-acid biosynthesis; L-lysine biosynthesis via DAP pathway; LL-2,6-diaminopimelate from (S)-tetrahydrodipicolinate (succinylase route): step 1/3. The chain is 2,3,4,5-tetrahydropyridine-2,6-dicarboxylate N-succinyltransferase from Edwardsiella ictaluri (strain 93-146).